The following is a 357-amino-acid chain: MAAPAKGENLSLVVHGPGDIRLENYPIPELGPNDVLLKMHSVGICGSDVHYWEHGRIGDFVVKKPMVLGHEAAGTVTKVGPMVKHLKPGDRVAIEPGVPREIDEFCKIGRYNLTPSIFFCATPPDDGNLCRFYKHSADFCYKLPDSVTFEEGALIEPLSVGIYACRRGSVSLGNKVLVCGAGPIGIVTLLVAKAMGASQVVVIDLSASRLAKAKEVGADFTIQVAKETPHDIAKKVESVLGSKPEVTIECTGAESSVQTGIYATHSGGTLVVVGMGPEMINLPLVHAAVREVDIKGVFRYCNTWPMAVSMLASKTLNVKPLVTHRFPLEKAVEAFETAKKGLGLKVMIKCDPNDQNP.

A2 carries the post-translational modification N-acetylalanine. Residue C45 participates in Zn(2+) binding. Y51 contributes to the substrate binding site. Zn(2+) contacts are provided by H70, E71, and E156. E156 provides a ligand contact to substrate. Phosphoserine is present on S169. NAD(+) is bound by residues I184, D204, R209, 273–275 (VGM), and 297–299 (VFR). Substrate-binding residues include R299 and Y300.

This sequence belongs to the zinc-containing alcohol dehydrogenase family. In terms of assembly, homotetramer; dimer of dimers. Zn(2+) is required as a cofactor. As to expression, expressed in liver and testis.

The protein resides in the mitochondrion membrane. It is found in the cell projection. It localises to the cilium. The protein localises to the flagellum. It carries out the reaction keto-D-fructose + NADH + H(+) = D-sorbitol + NAD(+). The catalysed reaction is xylitol + NAD(+) = D-xylulose + NADH + H(+). It catalyses the reaction L-iditol + NAD(+) = keto-L-sorbose + NADH + H(+). Functionally, polyol dehydrogenase that catalyzes the reversible NAD(+)-dependent oxidation of various sugar alcohols. Is active with D-sorbitol (D-glucitol) leading to the C2-oxidized product D-fructose. Is a key enzyme in the polyol pathway that interconverts glucose and fructose via sorbitol, which constitutes an important alternate route for glucose metabolism. May play a role in sperm motility by using sorbitol as an alternative energy source for sperm motility. This is Sorbitol dehydrogenase (Sord) from Rattus norvegicus (Rat).